The chain runs to 495 residues: Putative aldehyde dehydrogenase DhaS (495 aa).

Position 244–249 (Gly-244–Gly-249) interacts with NAD(+). Residues Glu-266 and Cys-300 contribute to the active site.

The protein belongs to the aldehyde dehydrogenase family.

It carries out the reaction an aldehyde + NAD(+) + H2O = a carboxylate + NADH + 2 H(+). The chain is Putative aldehyde dehydrogenase DhaS (dhaS) from Bacillus subtilis (strain 168).